The chain runs to 118 residues: Mating-type P-specific polypeptide Pc (118 aa).

The HMG box DNA-binding region spans 29-97 (KTTIYKNGFM…VRKQIAKLER (69 aa)).

The protein localises to the nucleus. Mating type proteins are sequence specific DNA-binding proteins that act as master switches in yeast differentiation by controlling gene expression in a cell type-specific fashion. Required for conjugation and efficient meiosis. This is Mating-type P-specific polypeptide Pc (matPc) from Schizosaccharomyces kambucha (Fission yeast).